A 303-amino-acid polypeptide reads, in one-letter code: Archaeosortase A (303 aa).

7 helical membrane passes run 3 to 23 (GLLS…GAVA), 36 to 56 (TAAW…FTLV), 60 to 80 (YIEG…GWLL), 93 to 113 (AVAA…FTLL), 169 to 189 (VVLA…IAAV), 200 to 220 (LAIA…FIAI), and 259 to 279 (LAVV…PELL). The active-site Acyl-thioester intermediate is the Cys173. Catalysis depends on Arg214, which acts as the Proton donor.

The protein belongs to the exosortase/archaeosortase family. Archaeosortase A subfamily.

The protein resides in the cell membrane. In terms of biological role, transpeptidase that recognizes and modifies its substrate by proteolytic cleavage of a sorting signal. Following cleavage, a covalent intermediate is formed via a thioester bond between the archaeosortase and its substrate, which is then transferred and covalently attached to the cell membrane. This sortase recognizes a tripartite structure consisting of a conserved Pro-Gly-Phe (PGF) motif, followed by a transmembrane alpha helix domain and a cluster of basic residues, usually at the C-terminus of target proteins. Confirmed substrates include the cell surface S-layer glycoprotein Csg and HVO_0405. ArtA is required for the C-terminal processing of Csg and for its lipidation and attachment to the archaeal plasma membrane. It is also required for the processing of HVO_0405, which contains an atypical central tripartite structure. The sequence is that of Archaeosortase A from Haloferax volcanii (strain ATCC 29605 / DSM 3757 / JCM 8879 / NBRC 14742 / NCIMB 2012 / VKM B-1768 / DS2) (Halobacterium volcanii).